The primary structure comprises 175 residues: uncharacterized protein (175 aa).

Positions Met1 to Gln23 are cleaved as a signal peptide.

This is an uncharacterized protein from Invertebrate iridescent virus 6 (IIV-6).